The primary structure comprises 79 residues: Small ribosomal subunit protein bS16 (79 aa).

Belongs to the bacterial ribosomal protein bS16 family.

This is Small ribosomal subunit protein bS16 from Nitratidesulfovibrio vulgaris (strain ATCC 29579 / DSM 644 / CCUG 34227 / NCIMB 8303 / VKM B-1760 / Hildenborough) (Desulfovibrio vulgaris).